Reading from the N-terminus, the 1049-residue chain is Probable disease resistance protein RF9 (1049 aa).

A coiled-coil region spans residues 25–41; it reads QGVEDQVTELKRDLNLL. The interval 139–158 is disordered; that stretch reads GYKQPQGDKQREMRPRFSKD. Basic and acidic residues predominate over residues 144–158; the sequence is QGDKQREMRPRFSKD. An NB-ARC domain is found at 147–460; the sequence is KQREMRPRFS…AEGIFQPRHY (314 aa). 190–197 is an ATP binding site; it reads GMGGLGKT. LRR repeat units follow at residues 584–608, 609–634, 657–682, 683–707, 776–799, 800–827, 849–873, 896–923, 945–968, and 990–1015; these read LELLRVLDIHRAKLKGGKLASSIGQ, LIHLRYLNLKHAEVTHIPYSLGNLKL, MQQLRYLALPKDMGRKTKLELSNLVK, LETLKNFSTKNCSLEDLRGMVRLRT, PSHLTTLYLQHCRLEEDPMPILEK, LHQLKELELRRKSFSGKEMVCSSGGFPQ, MPVLHTLDIRDCRKLKQLPDEHLPS, LVHLKELQLLFRSFSGRIMVCAGSGFPQ, MPQLHTLEIRRCPKLKKLPNGFPQ, and MPLLHTLRIWNCPKLKQLPDGLRFIY.

It belongs to the disease resistance NB-LRR family.

Potential disease resistance protein. The polypeptide is Probable disease resistance protein RF9 (RF9) (Arabidopsis thaliana (Mouse-ear cress)).